Reading from the N-terminus, the 119-residue chain is Large ribosomal subunit protein bL20 (119 aa).

The protein belongs to the bacterial ribosomal protein bL20 family.

Binds directly to 23S ribosomal RNA and is necessary for the in vitro assembly process of the 50S ribosomal subunit. It is not involved in the protein synthesizing functions of that subunit. The polypeptide is Large ribosomal subunit protein bL20 (Streptococcus suis (strain 98HAH33)).